We begin with the raw amino-acid sequence, 425 residues long: Serine--tRNA ligase (425 aa).

229 to 231 (TAE) is an L-serine binding site. 260–262 (RSE) provides a ligand contact to ATP. Residue glutamate 283 coordinates L-serine. 347–350 (EISS) lines the ATP pocket. Serine 384 lines the L-serine pocket.

This sequence belongs to the class-II aminoacyl-tRNA synthetase family. Type-1 seryl-tRNA synthetase subfamily. As to quaternary structure, homodimer. The tRNA molecule binds across the dimer.

It localises to the cytoplasm. It catalyses the reaction tRNA(Ser) + L-serine + ATP = L-seryl-tRNA(Ser) + AMP + diphosphate + H(+). It carries out the reaction tRNA(Sec) + L-serine + ATP = L-seryl-tRNA(Sec) + AMP + diphosphate + H(+). It functions in the pathway aminoacyl-tRNA biosynthesis; selenocysteinyl-tRNA(Sec) biosynthesis; L-seryl-tRNA(Sec) from L-serine and tRNA(Sec): step 1/1. In terms of biological role, catalyzes the attachment of serine to tRNA(Ser). Is also able to aminoacylate tRNA(Sec) with serine, to form the misacylated tRNA L-seryl-tRNA(Sec), which will be further converted into selenocysteinyl-tRNA(Sec). The chain is Serine--tRNA ligase from Rhizorhabdus wittichii (strain DSM 6014 / CCUG 31198 / JCM 15750 / NBRC 105917 / EY 4224 / RW1) (Sphingomonas wittichii).